We begin with the raw amino-acid sequence, 204 residues long: FMN-dependent NADH:quinone oxidoreductase (204 aa).

FMN-binding positions include Ser10 and 15–17 (SLS).

Belongs to the azoreductase type 1 family. In terms of assembly, homodimer. FMN is required as a cofactor.

The catalysed reaction is 2 a quinone + NADH + H(+) = 2 a 1,4-benzosemiquinone + NAD(+). It carries out the reaction N,N-dimethyl-1,4-phenylenediamine + anthranilate + 2 NAD(+) = 2-(4-dimethylaminophenyl)diazenylbenzoate + 2 NADH + 2 H(+). Functionally, quinone reductase that provides resistance to thiol-specific stress caused by electrophilic quinones. In terms of biological role, also exhibits azoreductase activity. Catalyzes the reductive cleavage of the azo bond in aromatic azo compounds to the corresponding amines. This Rhizobium johnstonii (strain DSM 114642 / LMG 32736 / 3841) (Rhizobium leguminosarum bv. viciae) protein is FMN-dependent NADH:quinone oxidoreductase.